A 224-amino-acid polypeptide reads, in one-letter code: EF-hand calcium-binding domain-containing protein 1 (224 aa).

An N-terminal signal peptide occupies residues 1–21 (MKVSLLLLALVLVCLVQGSES). The EF-hand domain maps to 115-150 (IAHPDFMKAYSIADVDGDGELSPKEFYNGPYVFEMD). The Ca(2+) site is built by D128, D130, D132, E134, and E139.

In terms of tissue distribution, component of the acid-soluble organic matrix of calcified layers of the shell (at protein level).

Its subcellular location is the secreted. This Lottia gigantea (Giant owl limpet) protein is EF-hand calcium-binding domain-containing protein 1.